A 360-amino-acid polypeptide reads, in one-letter code: Peptide chain release factor 1 (360 aa).

Gln-235 is modified (N5-methylglutamine).

The protein belongs to the prokaryotic/mitochondrial release factor family. Methylated by PrmC. Methylation increases the termination efficiency of RF1.

Its subcellular location is the cytoplasm. Peptide chain release factor 1 directs the termination of translation in response to the peptide chain termination codons UAG and UAA. The chain is Peptide chain release factor 1 from Dechloromonas aromatica (strain RCB).